A 261-amino-acid polypeptide reads, in one-letter code: Cytochrome c oxidase subunit 3 (261 aa).

Residues 1–15 (MTHQTHAYHMVNPSP) are Mitochondrial matrix-facing. A helical membrane pass occupies residues 16-34 (WPLTGALSALLMTSGLTMW). Topologically, residues 35 to 40 (FHFNST) are mitochondrial intermembrane. A helical membrane pass occupies residues 41–66 (ILLMLGLTTNMLTMYQWWRDIIREST). At 67–72 (FQGHHT) the chain is on the mitochondrial matrix side. A helical membrane pass occupies residues 73–105 (PVVQKGLRYGMILFIISEVLFFTGFFWAFYHSS). Residues 106–128 (LAPTPELGGCWPPTGIHPLNPLE) are Mitochondrial intermembrane-facing. A helical transmembrane segment spans residues 129 to 152 (VPLLNTSVLLASGVSITWAHHSLM). The Mitochondrial matrix segment spans residues 153–155 (EGH). Residues 156 to 183 (RNHMLQALFITIALGVYFTLLQASEYYE) form a helical membrane-spanning segment. Residues 184–190 (APFTISD) lie on the Mitochondrial intermembrane side of the membrane. Residues 191-223 (GVYGSTFFVATGFHGLHVIIGSTFLIVCFFRQL) traverse the membrane as a helical segment. Over 224–232 (KFHFTSSHH) the chain is Mitochondrial matrix. Residues 233–256 (FGFEAAAWYWHFVDVVWLFLYVSI) traverse the membrane as a helical segment. Residues 257 to 261 (YWWGS) lie on the Mitochondrial intermembrane side of the membrane.

Belongs to the cytochrome c oxidase subunit 3 family. As to quaternary structure, component of the cytochrome c oxidase (complex IV, CIV), a multisubunit enzyme composed of 14 subunits. The complex is composed of a catalytic core of 3 subunits MT-CO1, MT-CO2 and MT-CO3, encoded in the mitochondrial DNA, and 11 supernumerary subunits COX4I, COX5A, COX5B, COX6A, COX6B, COX6C, COX7A, COX7B, COX7C, COX8 and NDUFA4, which are encoded in the nuclear genome. The complex exists as a monomer or a dimer and forms supercomplexes (SCs) in the inner mitochondrial membrane with NADH-ubiquinone oxidoreductase (complex I, CI) and ubiquinol-cytochrome c oxidoreductase (cytochrome b-c1 complex, complex III, CIII), resulting in different assemblies (supercomplex SCI(1)III(2)IV(1) and megacomplex MCI(2)III(2)IV(2)).

The protein localises to the mitochondrion inner membrane. The enzyme catalyses 4 Fe(II)-[cytochrome c] + O2 + 8 H(+)(in) = 4 Fe(III)-[cytochrome c] + 2 H2O + 4 H(+)(out). Its function is as follows. Component of the cytochrome c oxidase, the last enzyme in the mitochondrial electron transport chain which drives oxidative phosphorylation. The respiratory chain contains 3 multisubunit complexes succinate dehydrogenase (complex II, CII), ubiquinol-cytochrome c oxidoreductase (cytochrome b-c1 complex, complex III, CIII) and cytochrome c oxidase (complex IV, CIV), that cooperate to transfer electrons derived from NADH and succinate to molecular oxygen, creating an electrochemical gradient over the inner membrane that drives transmembrane transport and the ATP synthase. Cytochrome c oxidase is the component of the respiratory chain that catalyzes the reduction of oxygen to water. Electrons originating from reduced cytochrome c in the intermembrane space (IMS) are transferred via the dinuclear copper A center (CU(A)) of subunit 2 and heme A of subunit 1 to the active site in subunit 1, a binuclear center (BNC) formed by heme A3 and copper B (CU(B)). The BNC reduces molecular oxygen to 2 water molecules using 4 electrons from cytochrome c in the IMS and 4 protons from the mitochondrial matrix. The polypeptide is Cytochrome c oxidase subunit 3 (MT-CO3) (Tragelaphus strepsiceros (Greater kudu)).